We begin with the raw amino-acid sequence, 160 residues long: Globin CTT-Y (160 aa).

Residues 1–16 (MKVLAIFALCIIGALA) form the signal peptide. Residues 17 to 160 (TPCDDFKIMQ…IRKVINANLE (144 aa)) enclose the Globin domain. Positions 74 and 109 each coordinate heme b.

It belongs to the globin family.

The protein is Globin CTT-Y (CTT-Y) of Chironomus thummi piger (Midge).